A 209-amino-acid polypeptide reads, in one-letter code: APC/C-CDH1 modulator 1 (209 aa).

The interval 1–38 (MISPSKKRTILSSKNINQKPRAVVKGNELRSPSKRRSQ) is disordered. Phosphoserine is present on S48. The residue at position 161 (T161) is a Phosphothreonine. At S202 the chain carries Phosphoserine.

As to quaternary structure, interacts with CDH1, BMH1 and BMH2.

Negative regulator of GDH1, the activator protein that regulates the ubiquitin ligase activity and substrate specificity of the anaphase promoting complex/cyclosome (APC/C), and which is required for exit from mitosis, cytokinesis and formation of prereplicative complexes in G1. This is APC/C-CDH1 modulator 1 (ACM1) from Saccharomyces cerevisiae (strain ATCC 204508 / S288c) (Baker's yeast).